The sequence spans 280 residues: UPF0494 membrane protein C750.06c (280 aa).

Transmembrane regions (helical) follow at residues 107–127, 144–164, 178–198, and 199–219; these read WPLLIIWSIIIVFAVDKKFEV, IWVPIAIYVCLLVLMLLSLIF, VIIAVLGAVLGMIIAVLGMII, and AALGMIIAALGATITGLLYFG.

The protein belongs to the UPF0494 family.

The protein localises to the cytoplasm. Its subcellular location is the vacuole. It localises to the membrane. The polypeptide is UPF0494 membrane protein C750.06c (Schizosaccharomyces pombe (strain 972 / ATCC 24843) (Fission yeast)).